The sequence spans 338 residues: Methionyl-tRNA formyltransferase (338 aa).

A (6S)-5,6,7,8-tetrahydrofolate-binding site is contributed by 110-113; it reads SLLP.

Belongs to the Fmt family.

It carries out the reaction L-methionyl-tRNA(fMet) + (6R)-10-formyltetrahydrofolate = N-formyl-L-methionyl-tRNA(fMet) + (6S)-5,6,7,8-tetrahydrofolate + H(+). Attaches a formyl group to the free amino group of methionyl-tRNA(fMet). The formyl group appears to play a dual role in the initiator identity of N-formylmethionyl-tRNA by promoting its recognition by IF2 and preventing the misappropriation of this tRNA by the elongation apparatus. In Synechococcus sp. (strain CC9605), this protein is Methionyl-tRNA formyltransferase.